A 444-amino-acid polypeptide reads, in one-letter code: Tol-Pal system protein TolB (444 aa).

The N-terminal stretch at 1-19 (MRNIIYFILSLLFSVTSYA) is a signal peptide.

This sequence belongs to the TolB family. As to quaternary structure, the Tol-Pal system is composed of five core proteins: the inner membrane proteins TolA, TolQ and TolR, the periplasmic protein TolB and the outer membrane protein Pal. They form a network linking the inner and outer membranes and the peptidoglycan layer.

The protein localises to the periplasm. Functionally, part of the Tol-Pal system, which plays a role in outer membrane invagination during cell division and is important for maintaining outer membrane integrity. This is Tol-Pal system protein TolB from Rickettsia rickettsii (strain Iowa).